Consider the following 485-residue polypeptide: Probable cobyric acid synthase (485 aa).

The GATase cobBQ-type domain occupies glutamate 250–isoleucine 435. Cysteine 328 (nucleophile) is an active-site residue. The active site involves histidine 427.

The protein belongs to the CobB/CobQ family. CobQ subfamily.

The protein operates within cofactor biosynthesis; adenosylcobalamin biosynthesis. Its function is as follows. Catalyzes amidations at positions B, D, E, and G on adenosylcobyrinic A,C-diamide. NH(2) groups are provided by glutamine, and one molecule of ATP is hydrogenolyzed for each amidation. In Methanosarcina mazei (strain ATCC BAA-159 / DSM 3647 / Goe1 / Go1 / JCM 11833 / OCM 88) (Methanosarcina frisia), this protein is Probable cobyric acid synthase.